A 348-amino-acid polypeptide reads, in one-letter code: UDP-3-O-acylglucosamine N-acyltransferase (348 aa).

Histidine 257 serves as the catalytic Proton acceptor.

It belongs to the transferase hexapeptide repeat family. LpxD subfamily. Homotrimer.

It carries out the reaction a UDP-3-O-[(3R)-3-hydroxyacyl]-alpha-D-glucosamine + a (3R)-hydroxyacyl-[ACP] = a UDP-2-N,3-O-bis[(3R)-3-hydroxyacyl]-alpha-D-glucosamine + holo-[ACP] + H(+). It participates in bacterial outer membrane biogenesis; LPS lipid A biosynthesis. Catalyzes the N-acylation of UDP-3-O-acylglucosamine using 3-hydroxyacyl-ACP as the acyl donor. Is involved in the biosynthesis of lipid A, a phosphorylated glycolipid that anchors the lipopolysaccharide to the outer membrane of the cell. The chain is UDP-3-O-acylglucosamine N-acyltransferase from Bartonella quintana (strain Toulouse) (Rochalimaea quintana).